A 383-amino-acid polypeptide reads, in one-letter code: Acetylornithine deacetylase (383 aa).

Histidine 80 is a Zn(2+) binding site. Aspartate 82 is an active-site residue. Aspartate 112 lines the Zn(2+) pocket. Glutamate 144 is an active-site residue. Residues glutamate 145, glutamate 169, and histidine 355 each coordinate Zn(2+).

Belongs to the peptidase M20A family. ArgE subfamily. As to quaternary structure, homodimer. Requires Zn(2+) as cofactor. Co(2+) is required as a cofactor. It depends on glutathione as a cofactor.

It is found in the cytoplasm. The catalysed reaction is N(2)-acetyl-L-ornithine + H2O = L-ornithine + acetate. The protein operates within amino-acid biosynthesis; L-arginine biosynthesis; L-ornithine from N(2)-acetyl-L-ornithine (linear): step 1/1. Its function is as follows. Catalyzes the hydrolysis of the amide bond of N(2)-acetylated L-amino acids. Cleaves the acetyl group from N-acetyl-L-ornithine to form L-ornithine, an intermediate in L-arginine biosynthesis pathway, and a branchpoint in the synthesis of polyamines. This chain is Acetylornithine deacetylase, found in Escherichia coli O17:K52:H18 (strain UMN026 / ExPEC).